Here is a 252-residue protein sequence, read N- to C-terminus: Phosphate import ATP-binding protein PstB (252 aa).

Positions 5-247 (LIASDVNIFY…PRDERTEAYV (243 aa)) constitute an ABC transporter domain. An ATP-binding site is contributed by 37 to 44 (GPSGCGKT).

It belongs to the ABC transporter superfamily. Phosphate importer (TC 3.A.1.7) family. As to quaternary structure, the complex is composed of two ATP-binding proteins (PstB), two transmembrane proteins (PstC and PstA) and a solute-binding protein (PstS).

The protein resides in the cell membrane. The enzyme catalyses phosphate(out) + ATP + H2O = ADP + 2 phosphate(in) + H(+). In terms of biological role, part of the ABC transporter complex PstSACB involved in phosphate import. Responsible for energy coupling to the transport system. In Deinococcus geothermalis (strain DSM 11300 / CIP 105573 / AG-3a), this protein is Phosphate import ATP-binding protein PstB.